The following is a 439-amino-acid chain: Enolase 1 (439 aa).

2 residues coordinate substrate: H160 and E169. E212 acts as the Proton donor in catalysis. Mg(2+)-binding residues include D247, E296, and D323. Residues E296 and D323 each coordinate substrate. The Proton acceptor role is filled by K348. Substrate contacts are provided by residues 375-378 (SHRS) and K399.

The protein belongs to the enolase family. Homodimer. It depends on Mg(2+) as a cofactor.

The protein resides in the cytoplasm. The enzyme catalyses (2R)-2-phosphoglycerate = phosphoenolpyruvate + H2O. It functions in the pathway carbohydrate degradation; glycolysis; pyruvate from D-glyceraldehyde 3-phosphate: step 4/5. The protein is Enolase 1 (ENO1) of Debaryomyces hansenii (strain ATCC 36239 / CBS 767 / BCRC 21394 / JCM 1990 / NBRC 0083 / IGC 2968) (Yeast).